Reading from the N-terminus, the 119-residue chain is Venom allergen 2 (119 aa).

The protein belongs to the ant venom allergen 2/4 family. Homodimer; disulfide-linked. As to expression, expressed by the venom gland.

The protein localises to the secreted. This is Venom allergen 2 from Solenopsis richteri (Black imported fire ant).